The primary structure comprises 688 residues: Eukaryotic translation initiation factor 3 subunit B (688 aa).

Residues 1 to 28 (MAKKKGDQYDSDGAEDQDYDEEPVFEDP) form a disordered region. Positions 9 to 25 (YDSDGAEDQDYDEEPVF) are enriched in acidic residues. One can recognise an RRM domain in the interval 57–141 (NVIVVDNIPV…HTLLVNLFSD (85 aa)). WD repeat units follow at residues 208–246 (RERF…KINK), 247–287 (FAHS…EKRS), 291–329 (DGSS…LLDK), 332–367 (IKVQ…TLLE), 440–482 (EVKE…EPTM), and 527–572 (GDHY…KRVN). The stretch at 612-643 (DRVRMTRASKELLEKRAKLREQFVEYRAKRVN) forms a coiled coil.

The protein belongs to the eIF-3 subunit B family. Component of the eukaryotic translation initiation factor 3 (eIF-3) complex.

It localises to the cytoplasm. Functionally, RNA-binding component of the eukaryotic translation initiation factor 3 (eIF-3) complex, which is involved in protein synthesis of a specialized repertoire of mRNAs and, together with other initiation factors, stimulates binding of mRNA and methionyl-tRNAi to the 40S ribosome. The eIF-3 complex specifically targets and initiates translation of a subset of mRNAs involved in cell proliferation. This is Eukaryotic translation initiation factor 3 subunit B from Culex quinquefasciatus (Southern house mosquito).